Reading from the N-terminus, the 179-residue chain is MEQFHATTIVCVRRGNRVALGGDGQVTLGNIVIKGTARKIRRLYHDKVLAGFAGATADAFTLQERFEAKLEKHQGHLMRAAVELTRDWRTDRVLRRLEAMLIVADAEHTLVLTGNGDVLEPEHGLAAIGSGGAYAQSAALALLRNTELPPETIVKQSLEIAGDLCIYTNQNHVIETLGG.

Threonine 7 is an active-site residue. Na(+)-binding residues include glycine 162, cysteine 165, and threonine 168.

Belongs to the peptidase T1B family. HslV subfamily. In terms of assembly, a double ring-shaped homohexamer of HslV is capped on each side by a ring-shaped HslU homohexamer. The assembly of the HslU/HslV complex is dependent on binding of ATP.

The protein localises to the cytoplasm. The enzyme catalyses ATP-dependent cleavage of peptide bonds with broad specificity.. Allosterically activated by HslU binding. Protease subunit of a proteasome-like degradation complex believed to be a general protein degrading machinery. The polypeptide is ATP-dependent protease subunit HslV (Bordetella avium (strain 197N)).